Reading from the N-terminus, the 864-residue chain is Leucine--tRNA ligase (864 aa).

A 'HIGH' region motif is present at residues Pro-57 to His-67. The 'KMSKS' region motif lies at Lys-628–Ser-632. Lys-631 serves as a coordination point for ATP.

The protein belongs to the class-I aminoacyl-tRNA synthetase family.

It localises to the cytoplasm. The enzyme catalyses tRNA(Leu) + L-leucine + ATP = L-leucyl-tRNA(Leu) + AMP + diphosphate. The sequence is that of Leucine--tRNA ligase from Prochlorococcus marinus (strain MIT 9515).